We begin with the raw amino-acid sequence, 183 residues long: GTP cyclohydrolase 1 (183 aa).

Residues cysteine 71, histidine 74, and cysteine 142 each coordinate Zn(2+).

Belongs to the GTP cyclohydrolase I family. In terms of assembly, homomer.

The catalysed reaction is GTP + H2O = 7,8-dihydroneopterin 3'-triphosphate + formate + H(+). Its pathway is cofactor biosynthesis; 7,8-dihydroneopterin triphosphate biosynthesis; 7,8-dihydroneopterin triphosphate from GTP: step 1/1. The protein is GTP cyclohydrolase 1 of Leptospira biflexa serovar Patoc (strain Patoc 1 / Ames).